A 494-amino-acid chain; its full sequence is Trigger factor (494 aa).

A PPIase FKBP-type domain is found at 169 to 254; it reads GDRITMDYVG…VKEVAAPADV (86 aa). The tract at residues 441–494 is disordered; that stretch reads LAEEEGEAKAETKKAAPKKKAAAKAEAADAGEGEEAAPKKKAAPKKKAADESAE.

Belongs to the FKBP-type PPIase family. Tig subfamily.

The protein resides in the cytoplasm. It catalyses the reaction [protein]-peptidylproline (omega=180) = [protein]-peptidylproline (omega=0). In terms of biological role, involved in protein export. Acts as a chaperone by maintaining the newly synthesized protein in an open conformation. Functions as a peptidyl-prolyl cis-trans isomerase. The protein is Trigger factor of Rhizobium johnstonii (strain DSM 114642 / LMG 32736 / 3841) (Rhizobium leguminosarum bv. viciae).